A 328-amino-acid polypeptide reads, in one-letter code: MKKNRMMMMIWSVGVVWMLLLVGGSYGEQCGRQAGGALCPGGNCCSQFGWCGSTTDYCGPGCQSQCGGPSPAPTDLSALISRSTFDQMLKHRNDGACPAKGFYTYDAFIAAAKAYPSFGNTGDTATRKREIAAFLGQTSHETTGGWATAPDGPYAWGYCFVRERNPSTYCSATPQFPCAPGQQYYGRGPIQISWNYNYGQCGRAIGVDLLNKPDLVATDSVISFKSALWFWMTAQSPKPSSHDVITSRWTPSSADVAARRLPGYGTVTNIINGGLECGRGQDSRVQDRIGFFKRYCDLLGVGYGNNLDCYSQTPFGNSLLLSDLVTSQ.

The first 27 residues, 1 to 27, serve as a signal peptide directing secretion; that stretch reads MKKNRMMMMIWSVGVVWMLLLVGGSYG. The Chitin-binding type-1 domain occupies 28-68; that stretch reads EQCGRQAGGALCPGGNCCSQFGWCGSTTDYCGPGCQSQCGG. Disulfide bonds link cysteine 30-cysteine 45, cysteine 39-cysteine 51, cysteine 44-cysteine 58, cysteine 62-cysteine 66, cysteine 97-cysteine 159, cysteine 170-cysteine 178, and cysteine 277-cysteine 309. Glutamate 141 (proton donor) is an active-site residue. Residues 318-328 constitute a propeptide, removed in mature form; it reads SLLLSDLVTSQ.

This sequence belongs to the glycosyl hydrolase 19 family. Chitinase class I subfamily.

The protein resides in the vacuole. It catalyses the reaction Random endo-hydrolysis of N-acetyl-beta-D-glucosaminide (1-&gt;4)-beta-linkages in chitin and chitodextrins.. Its function is as follows. Defense against chitin-containing fungal pathogens. This is Endochitinase from Phaseolus vulgaris (Kidney bean).